Consider the following 365-residue polypeptide: Major capsid protein (365 aa).

A propeptide spanning residues 1-48 is cleaved from the precursor; the sequence is MANKITTFLSGQTGKQISNIDLLNSIRTRASADYQADIPVLEGARINH.

It localises to the virion. Assembles to form an icosahedral capsid. This is Major capsid protein (9) from Streptococcus phage Cp-1 (Bacteriophage Cp-1).